Here is a 341-residue protein sequence, read N- to C-terminus: Putative amino-acid ABC transporter-binding protein YhdW (341 aa).

An N-terminal signal peptide occupies residues 1–19 (MKKMMIATLAAASVLLAVA).

It belongs to the bacterial solute-binding protein 3 family.

It localises to the periplasm. Probably part of the binding-protein-dependent transport system YdhWXYZ for an amino acid. This chain is Putative amino-acid ABC transporter-binding protein YhdW (yhdW), found in Escherichia coli (strain K12).